A 188-amino-acid polypeptide reads, in one-letter code: ATP synthase subunit b (188 aa).

The helical transmembrane segment at 21–41 (ILPHLGELIVGIIFAIIIYAV) threads the bilayer.

Belongs to the ATPase B chain family. In terms of assembly, F-type ATPases have 2 components, F(1) - the catalytic core - and F(0) - the membrane proton channel. F(1) has five subunits: alpha(3), beta(3), gamma(1), delta(1), epsilon(1). F(0) has three main subunits: a(1), b(2) and c(10-14). The alpha and beta chains form an alternating ring which encloses part of the gamma chain. F(1) is attached to F(0) by a central stalk formed by the gamma and epsilon chains, while a peripheral stalk is formed by the delta and b chains.

It localises to the cell membrane. In terms of biological role, f(1)F(0) ATP synthase produces ATP from ADP in the presence of a proton or sodium gradient. F-type ATPases consist of two structural domains, F(1) containing the extramembraneous catalytic core and F(0) containing the membrane proton channel, linked together by a central stalk and a peripheral stalk. During catalysis, ATP synthesis in the catalytic domain of F(1) is coupled via a rotary mechanism of the central stalk subunits to proton translocation. Functionally, component of the F(0) channel, it forms part of the peripheral stalk, linking F(1) to F(0). In Kineococcus radiotolerans (strain ATCC BAA-149 / DSM 14245 / SRS30216), this protein is ATP synthase subunit b.